The following is a 332-amino-acid chain: Ribosomal RNA small subunit methyltransferase H (332 aa).

Residues Gly-36–His-38, Asp-61, Phe-88, Asp-114, and Gln-121 each bind S-adenosyl-L-methionine.

This sequence belongs to the methyltransferase superfamily. RsmH family.

The protein resides in the cytoplasm. The enzyme catalyses cytidine(1402) in 16S rRNA + S-adenosyl-L-methionine = N(4)-methylcytidine(1402) in 16S rRNA + S-adenosyl-L-homocysteine + H(+). Its function is as follows. Specifically methylates the N4 position of cytidine in position 1402 (C1402) of 16S rRNA. The chain is Ribosomal RNA small subunit methyltransferase H from Pelodictyon phaeoclathratiforme (strain DSM 5477 / BU-1).